A 431-amino-acid polypeptide reads, in one-letter code: MSLMTKLGFRALVASCLIAAGGAANAQVNVLITGVGSTQFPIATANFANEAGLPQQVTSIVRADLARSGKFTNIDAGSTPVPETASVDLGAWKAKGANAFVAGSVNREANGQYKVNFILYDTVKQQSLGGLSLTANDTTLRTAGHKIADYIYQKLLGVRGVFATRLSYVIKTGNRYQLQISDSDGQNARIALSSTEPIISPAWSPSGTKVAYVSFERKKPIVYIHDLPTGRRYMVSDQKGNNSAPAWSPDGNTLAVALSLTGNTQIYTVNANGGGLRRLTQSSSIDTEPFYSPDGHWIYFTSDRGGAPQIYRMPAQGESAGAAQRVTFTGSYNTSPRVSPDGKLLAYISRTGGGFKLYVQDLQTGAANAITNTNRDESPSFAANGQYILYATQSGGRNVLAAVPTDGSAPPQILSVQGGSVREPSWGPFMQ.

The first 26 residues, 1-26 (MSLMTKLGFRALVASCLIAAGGAANA), serve as a signal peptide directing secretion. The disordered stretch occupies residues 411 to 431 (PQILSVQGGSVREPSWGPFMQ).

This sequence belongs to the TolB family. As to quaternary structure, the Tol-Pal system is composed of five core proteins: the inner membrane proteins TolA, TolQ and TolR, the periplasmic protein TolB and the outer membrane protein Pal. They form a network linking the inner and outer membranes and the peptidoglycan layer.

Its subcellular location is the periplasm. In terms of biological role, part of the Tol-Pal system, which plays a role in outer membrane invagination during cell division and is important for maintaining outer membrane integrity. This Burkholderia vietnamiensis (strain G4 / LMG 22486) (Burkholderia cepacia (strain R1808)) protein is Tol-Pal system protein TolB.